We begin with the raw amino-acid sequence, 614 residues long: Probable ATP-dependent RNA helicase DDX5 (614 aa).

Residues 1–15 (MSGYSSDRDRGRDRG) are compositionally biased toward basic and acidic residues. Residues 1–39 (MSGYSSDRDRGRDRGFGAPRFGGSRAGPLSGKKFGNPGE) are disordered. Serine 24 carries the post-translational modification Phosphoserine. Residue lysine 32 is modified to N6-acetyllysine; alternate. Lysine 32 participates in a covalent cross-link: Glycyl lysine isopeptide (Lys-Gly) (interchain with G-Cter in SUMO2); alternate. N6-acetyllysine occurs at positions 33 and 40. A Glycyl lysine isopeptide (Lys-Gly) (interchain with G-Cter in SUMO2) cross-link involves residue lysine 45. Residue lysine 53 forms a Glycyl lysine isopeptide (Lys-Gly) (interchain with G-Cter in SUMO2); alternate linkage. A Glycyl lysine isopeptide (Lys-Gly) (interchain with G-Cter in SUMO); alternate cross-link involves residue lysine 53. Residue lysine 53 forms a Glycyl lysine isopeptide (Lys-Gly) (interchain with G-Cter in SUMO1); alternate linkage. Positions 94–122 (LNFYEANFPANVMDVIARQNFTEPTAIQA) match the Q motif motif. Residues 114–116 (FTE), glutamine 121, and 138–145 (AQTGSGKT) each bind ATP. In terms of domain architecture, Helicase ATP-binding spans 125–300 (WPVALSGLDM…EDFLKDYIHI (176 aa)). The residue at position 236 (lysine 236) is an N6-acetyllysine. The DEAD box signature appears at 248 to 251 (DEAD). Tyrosine 297 is subject to Phosphotyrosine. In terms of domain architecture, Helicase C-terminal spans 328-475 (KLIRLMEEIM…AINPKLLQLV (148 aa)). Glycyl lysine isopeptide (Lys-Gly) (interchain with G-Cter in SUMO2) cross-links involve residues lysine 340, lysine 343, lysine 388, lysine 391, lysine 411, lysine 437, lysine 451, and lysine 470. The tract at residues 477-504 (DRGSGRSRGRGGMKDDRRDRYSAGKRGG) is disordered. The segment at 477–614 (DRGSGRSRGR…GYPMPTGYSQ (138 aa)) is transactivation domain. Serine 480 carries the phosphoserine modification. Basic and acidic residues predominate over residues 488 to 498 (GMKDDRRDRYS). Residue serine 520 is modified to Phosphoserine. A Glycyl lysine isopeptide (Lys-Gly) (interchain with G-Cter in SUMO2) cross-link involves residue lysine 523.

This sequence belongs to the DEAD box helicase family. DDX5/DBP2 subfamily. As to quaternary structure, identified in the spliceosome C complex. Component of a ribonucleoprotein complex containing mRNAs and RNA-binding proteins including DDX5, HNRNPH2 and SRSF1 as well as splicing regulator ARVCF. Interacts with RBM4; the interaction occurs in an RNA-independent manner. Interacts with AGO1 and AGO2. Interacts with ESR1, AR, EP300, CREBBP, POLR2A, TP53, RUNX2 and HDAC1. Self-associates. Interacts with DDX17. Interacts with BRDT. The large PER complex involved in the repression of transcriptional termination is composed of at least PER2, CDK9, DDX5, DHX9, NCBP1 and POLR2A (active). Interacts with DHX36; this interaction occurs in a RNA-dependent manner. Interacts with NUPR1. Interacts with ERCC6. Interacts with DDX3X in the cytoplasm; this interaction may be more efficient when both proteins are unphosphorylated. Arg-502 is dimethylated, probably to asymmetric dimethylarginine. In terms of processing, sumoylated; sumoylation, promoted by PIAS1, promotes interaction with HDAC1 and transcriptional repression activity. Sumoylation also significantly increases stability, and reduces polyubiquitination. Post-translationally, polyubiquitinated, leading to proteasomal degradation. Weakly phosphorylated in the G1/S phase of the cell cycle and much more at G2/M, especially at Thr and Tyr residues.

The protein localises to the nucleus. It localises to the nucleolus. It is found in the nucleus speckle. The protein resides in the cytoplasm. It carries out the reaction ATP + H2O = ADP + phosphate + H(+). Its function is as follows. Involved in the alternative regulation of pre-mRNA splicing; its RNA helicase activity is necessary for increasing tau exon 10 inclusion and occurs in a RBM4-dependent manner. Binds to the tau pre-mRNA in the stem-loop region downstream of exon 10. The rate of ATP hydrolysis is highly stimulated by single-stranded RNA. Involved in transcriptional regulation; the function is independent of the RNA helicase activity. Transcriptional coactivator for androgen receptor AR but probably not ESR1. Synergizes with DDX17 and SRA1 RNA to activate MYOD1 transcriptional activity and involved in skeletal muscle differentiation. Transcriptional coactivator for p53/TP53 and involved in p53/TP53 transcriptional response to DNA damage and p53/TP53-dependent apoptosis. Transcriptional coactivator for RUNX2 and involved in regulation of osteoblast differentiation. Acts as a transcriptional repressor in a promoter-specific manner; the function probably involves association with histone deacetylases, such as HDAC1. As component of a large PER complex is involved in the inhibition of 3' transcriptional termination of circadian target genes such as PER1 and NR1D1 and the control of the circadian rhythms. This Homo sapiens (Human) protein is Probable ATP-dependent RNA helicase DDX5 (DDX5).